The chain runs to 233 residues: Small ribosomal subunit protein uS3 (233 aa).

In terms of domain architecture, KH type-2 spans Val-39–Arg-107. Residues Pro-209 to Asn-233 are disordered.

Belongs to the universal ribosomal protein uS3 family. In terms of assembly, part of the 30S ribosomal subunit. Forms a tight complex with proteins S10 and S14.

In terms of biological role, binds the lower part of the 30S subunit head. Binds mRNA in the 70S ribosome, positioning it for translation. The sequence is that of Small ribosomal subunit protein uS3 from Laribacter hongkongensis (strain HLHK9).